A 319-amino-acid chain; its full sequence is Glutamyl-Q tRNA(Asp) synthetase (319 aa).

L-glutamate contacts are provided by residues 23 to 27 (RFAPS) and Glu-59. The short motif at 26–36 (PSPSGPLHAGS) is the 'HIGH' region element. Residues Cys-115, Cys-117, Tyr-139, and Cys-143 each coordinate Zn(2+). L-glutamate-binding residues include Tyr-197 and Arg-215. Positions 254 to 258 (KLSKQ) match the 'KMSKS' region motif. Lys-257 lines the ATP pocket.

This sequence belongs to the class-I aminoacyl-tRNA synthetase family. GluQ subfamily. It depends on Zn(2+) as a cofactor.

Catalyzes the tRNA-independent activation of glutamate in presence of ATP and the subsequent transfer of glutamate onto a tRNA(Asp). Glutamate is transferred on the 2-amino-5-(4,5-dihydroxy-2-cyclopenten-1-yl) moiety of the queuosine in the wobble position of the QUC anticodon. This Bordetella bronchiseptica (strain ATCC BAA-588 / NCTC 13252 / RB50) (Alcaligenes bronchisepticus) protein is Glutamyl-Q tRNA(Asp) synthetase.